Here is a 169-residue protein sequence, read N- to C-terminus: Small ribosomal subunit protein uS9 (169 aa).

Disordered regions lie at residues 1 to 29 and 128 to 169; these read MVEPTGIEDVQEYDENSEEYPAEYTTETP and MDPE…YSKR. Over residues 9-21 the composition is skewed to acidic residues; sequence DVQEYDENSEEYP. Residues 150 to 169 are compositionally biased toward basic residues; the sequence is VERKKAGLKKARKAPQYSKR.

Belongs to the universal ribosomal protein uS9 family.

The protein is Small ribosomal subunit protein uS9 of Thermobifida fusca (strain YX).